The sequence spans 519 residues: Bifunctional purine biosynthesis protein PurH (519 aa).

Residues Met1–Val147 form the MGS-like domain.

It belongs to the PurH family.

It catalyses the reaction (6R)-10-formyltetrahydrofolate + 5-amino-1-(5-phospho-beta-D-ribosyl)imidazole-4-carboxamide = 5-formamido-1-(5-phospho-D-ribosyl)imidazole-4-carboxamide + (6S)-5,6,7,8-tetrahydrofolate. The catalysed reaction is IMP + H2O = 5-formamido-1-(5-phospho-D-ribosyl)imidazole-4-carboxamide. The protein operates within purine metabolism; IMP biosynthesis via de novo pathway; 5-formamido-1-(5-phospho-D-ribosyl)imidazole-4-carboxamide from 5-amino-1-(5-phospho-D-ribosyl)imidazole-4-carboxamide (10-formyl THF route): step 1/1. It functions in the pathway purine metabolism; IMP biosynthesis via de novo pathway; IMP from 5-formamido-1-(5-phospho-D-ribosyl)imidazole-4-carboxamide: step 1/1. The protein is Bifunctional purine biosynthesis protein PurH of Trichlorobacter lovleyi (strain ATCC BAA-1151 / DSM 17278 / SZ) (Geobacter lovleyi).